A 331-amino-acid polypeptide reads, in one-letter code: Thioredoxin-like fold domain-containing protein MRL7, chloroplastic (331 aa).

The N-terminal 59 residues, 1–59 (MSFFAVACSAPRSSMLLTGLNSSFSDMHRSPLFVFPVTISSRSVKRFAAVSSDSVLDPE), are a transit peptide targeting the chloroplast. Disordered regions lie at residues 52–105 (SDSV…ADAV) and 141–160 (GVDEEEEEEEEMVVEEEDPD). Residues 142–160 (VDEEEEEEEEMVVEEEDPD) are compositionally biased toward acidic residues.

As to quaternary structure, component of the transcriptionally active chromosome (TAC) complexes. Interacts with FSD2 and PRDA1. Interacts with FSD3 and CITRX/TRXZ. Binds to PTAC12/HMR/PAP5. In terms of tissue distribution, expressed in leaves, shoots, stems, cauline leaves, flower buds, flowers and siliques.

The protein localises to the plastid. Its subcellular location is the chloroplast. It is found in the chloroplast stroma. It localises to the chloroplast nucleoid. The protein resides in the nucleus. In terms of biological role, plays an essential role in early steps of chloroplast development. Involved in the regulation of plastid gene expression. May positively regulate plastid-encoded RNA polymerase (PEP) activity through binding to FSD3 and CITRX/TRXZ. Involved in redox-mediated regulation of chloroplast development. Possesses disulfide reductase activity in vitro. Required for the proper function of the plastid transcriptional machinery and protein accumulation in thylakoid membranes. May function as molecular chaperone to ensure proper organization of the nucleoids in chloroplasts. May mediate some aspect of thylakoid structure or function that controls non-photochemical quenching (NPQ). Participates in the early light signaling events of photobody biogenesis in chloroplasts. May mediate the degradation of two repressors of chloroplast biogenesis, PIF1 and PIF3 in nucleus. Collaboratively with PTAC12/HMR/PAP5, involved in the regulation of thermoresponsive responses via the stabilization of PIF4 in the daytime to initiate thermomorphogenesis. This is Thioredoxin-like fold domain-containing protein MRL7, chloroplastic from Arabidopsis thaliana (Mouse-ear cress).